Reading from the N-terminus, the 520-residue chain is Hydroxymethylglutaryl-CoA synthase, cytoplasmic (520 aa).

Ser4 carries the post-translational modification Phosphoserine. Ala44 contributes to the (3S)-3-hydroxy-3-methylglutaryl-CoA binding site. Ala44–Lys46 serves as a coordination point for CoA. Lys46 carries the post-translational modification N6-acetyllysine. Glu95 functions as the Proton donor/acceptor in the catalytic mechanism. The (3S)-3-hydroxy-3-methylglutaryl-CoA site is built by Cys129, Asn167, Thr171, Ser221, and His264. Cys129 (acyl-thioester intermediate) is an active-site residue. Position 167 (Asn167) interacts with CoA. Residue Ser221 coordinates CoA. Residue His264 is the Proton donor/acceptor of the active site. Residues Lys269 and Lys273 each contribute to the CoA site. Lys273, Asn343, and Ser377 together coordinate (3S)-3-hydroxy-3-methylglutaryl-CoA. The residue at position 273 (Lys273) is an N6-acetyllysine. Thr476 carries the phosphothreonine modification. Residues His492–His520 are disordered. Phosphoserine is present on residues Ser495 and Ser516.

Belongs to the thiolase-like superfamily. HMG-CoA synthase family. In terms of assembly, homodimer.

Its subcellular location is the cytoplasm. The enzyme catalyses acetoacetyl-CoA + acetyl-CoA + H2O = (3S)-3-hydroxy-3-methylglutaryl-CoA + CoA + H(+). It functions in the pathway metabolic intermediate biosynthesis; (R)-mevalonate biosynthesis; (R)-mevalonate from acetyl-CoA: step 2/3. Catalyzes the condensation of acetyl-CoA with acetoacetyl-CoA to form HMG-CoA, which is converted by HMG-CoA reductase (HMGCR) into mevalonate, a precursor for cholesterol synthesis. This Pongo abelii (Sumatran orangutan) protein is Hydroxymethylglutaryl-CoA synthase, cytoplasmic.